An 89-amino-acid chain; its full sequence is MKEIVIWPAYFDLKRTKNEGRKVPKSFGVLNPKLKDIVSIIEKMGHEYSIDNKKSYPKEPWEICGYLKVTIDEKTSKLDFLKELCKRMK.

It belongs to the SRP19 family. As to quaternary structure, part of the signal recognition particle protein translocation system, which is composed of SRP and FtsY. Archaeal SRP consists of a 7S RNA molecule of 300 nucleotides and two protein subunits: SRP54 and SRP19.

The protein resides in the cytoplasm. Involved in targeting and insertion of nascent membrane proteins into the cytoplasmic membrane. Binds directly to 7S RNA and mediates binding of the 54 kDa subunit of the SRP. The chain is Signal recognition particle 19 kDa protein from Methanococcus vannielii (strain ATCC 35089 / DSM 1224 / JCM 13029 / OCM 148 / SB).